We begin with the raw amino-acid sequence, 299 residues long: Porphobilinogen deaminase (299 aa).

At cysteine 242 the chain carries S-(dipyrrolylmethanemethyl)cysteine.

It belongs to the HMBS family. As to quaternary structure, monomer. The cofactor is dipyrromethane.

It carries out the reaction 4 porphobilinogen + H2O = hydroxymethylbilane + 4 NH4(+). It functions in the pathway porphyrin-containing compound metabolism; protoporphyrin-IX biosynthesis; coproporphyrinogen-III from 5-aminolevulinate: step 2/4. Functionally, tetrapolymerization of the monopyrrole PBG into the hydroxymethylbilane pre-uroporphyrinogen in several discrete steps. This is Porphobilinogen deaminase from Rickettsia typhi (strain ATCC VR-144 / Wilmington).